The following is a 173-amino-acid chain: Zinc resistance-associated protein homolog (173 aa).

The signal sequence occupies residues 1–28 (MNSKRIALGIIALATVVSLGTAANNAFA).

It belongs to the ZraP family.

The sequence is that of Zinc resistance-associated protein homolog from Nitratidesulfovibrio vulgaris (strain ATCC 29579 / DSM 644 / CCUG 34227 / NCIMB 8303 / VKM B-1760 / Hildenborough) (Desulfovibrio vulgaris).